Reading from the N-terminus, the 338-residue chain is Egl nine homolog 1 (338 aa).

Over residues 1–11 (PRAQPAPAQPR) the composition is skewed to low complexity. A disordered region spans residues 1 to 99 (PRAQPAPAQP…PSGGLRPNGQ (99 aa)). At S52 the chain carries Phosphoserine. 2 positions are modified to S-nitrosocysteine: C116 and C123. The beta(2)beta(3) 'finger-like' loop stretch occupies residues 156-166 (VSQKSDSSKDI). A Fe2OG dioxygenase domain is found at 209 to 307 (GRTKAMVACY…RYAITVWYFD (99 aa)). The residue at position 217 (C217) is an S-nitrosocysteine. The Fe cation site is built by H228 and D230. S-nitrosocysteine occurs at positions 238 and 241. H289 contributes to the Fe cation binding site. R298 lines the 2-oxoglutarate pocket.

In terms of assembly, monomer. Interacts with ING4; the interaction inhibits the hydroxylation of HIF alpha proteins. Interacts with PTGES3 (via PXLE motif); thereby recruiting EGLN1 to the HSP90 pathway to facilitate HIF alpha proteins hydroxylation. Interacts with LIMD1. Found in a complex composed of LIMD1, VHL, EGLN1/PHD2, ELOB and CUL2. Interacts with EPAS1. Interacts with CBFA2T3 and HIF1A. Requires Fe(2+) as cofactor. L-ascorbate serves as cofactor. In terms of processing, S-nitrosylation inhibits the enzyme activity up to 60% under aerobic conditions. Chelation of Fe(2+) has no effect on the S-nitrosylation. It is uncertain whether nitrosylation occurs on Cys-238 or Cys-241. In terms of tissue distribution, expressed in heart, liver, kidney, brain, liver and testis. Highest levels in heart, lowest in liver.

It is found in the cytoplasm. Its subcellular location is the nucleus. It carries out the reaction L-prolyl-[hypoxia-inducible factor alpha subunit] + 2-oxoglutarate + O2 = trans-4-hydroxy-L-prolyl-[hypoxia-inducible factor alpha subunit] + succinate + CO2. With respect to regulation, increased activation in hypoxia. Hydroxylation of the C-terminal ODD domain (CODD) proline of HIF1A is activated by cyclosporin A (CsA). Functionally, cellular oxygen sensor that catalyzes, under normoxic conditions, the post-translational formation of 4-hydroxyproline in hypoxia-inducible factor (HIF) alpha proteins. Hydroxylates a specific proline found in each of the oxygen-dependent degradation (ODD) domains (N-terminal, NODD, and C-terminal, CODD) of HIF1A. Also hydroxylates HIF2A. Has a preference for the CODD site for both HIF1A and HIF1B. Hydroxylated HIFs are then targeted for proteasomal degradation via the von Hippel-Lindau ubiquitination complex. Under hypoxic conditions, the hydroxylation reaction is attenuated allowing HIFs to escape degradation resulting in their translocation to the nucleus, heterodimerization with HIF1B, and increased expression of hypoxy-inducible genes. EGLN1 is the most important isozyme under normoxia and, through regulating the stability of HIF1, involved in various hypoxia-influenced processes such as angiogenesis in retinal and cardiac functionality. Target proteins are preferentially recognized via a LXXLAP motif. This is Egl nine homolog 1 (Egln1) from Rattus norvegicus (Rat).